The chain runs to 312 residues: 4-hydroxy-3-methylbut-2-enyl diphosphate reductase (312 aa).

[4Fe-4S] cluster is bound at residue C15. (2E)-4-hydroxy-3-methylbut-2-enyl diphosphate contacts are provided by H44 and H77. Residues H44 and H77 each contribute to the dimethylallyl diphosphate site. Residues H44 and H77 each coordinate isopentenyl diphosphate. C99 serves as a coordination point for [4Fe-4S] cluster. H127 is a binding site for (2E)-4-hydroxy-3-methylbut-2-enyl diphosphate. H127 is a dimethylallyl diphosphate binding site. Isopentenyl diphosphate is bound at residue H127. The active-site Proton donor is E129. T167 contacts (2E)-4-hydroxy-3-methylbut-2-enyl diphosphate. C197 is a binding site for [4Fe-4S] cluster. The (2E)-4-hydroxy-3-methylbut-2-enyl diphosphate site is built by S225, S226, N227, and S269. Positions 225, 226, 227, and 269 each coordinate dimethylallyl diphosphate. Isopentenyl diphosphate is bound by residues S225, S226, N227, and S269.

This sequence belongs to the IspH family. Requires [4Fe-4S] cluster as cofactor.

It carries out the reaction isopentenyl diphosphate + 2 oxidized [2Fe-2S]-[ferredoxin] + H2O = (2E)-4-hydroxy-3-methylbut-2-enyl diphosphate + 2 reduced [2Fe-2S]-[ferredoxin] + 2 H(+). The catalysed reaction is dimethylallyl diphosphate + 2 oxidized [2Fe-2S]-[ferredoxin] + H2O = (2E)-4-hydroxy-3-methylbut-2-enyl diphosphate + 2 reduced [2Fe-2S]-[ferredoxin] + 2 H(+). Its pathway is isoprenoid biosynthesis; dimethylallyl diphosphate biosynthesis; dimethylallyl diphosphate from (2E)-4-hydroxy-3-methylbutenyl diphosphate: step 1/1. It functions in the pathway isoprenoid biosynthesis; isopentenyl diphosphate biosynthesis via DXP pathway; isopentenyl diphosphate from 1-deoxy-D-xylulose 5-phosphate: step 6/6. Catalyzes the conversion of 1-hydroxy-2-methyl-2-(E)-butenyl 4-diphosphate (HMBPP) into a mixture of isopentenyl diphosphate (IPP) and dimethylallyl diphosphate (DMAPP). Acts in the terminal step of the DOXP/MEP pathway for isoprenoid precursor biosynthesis. The protein is 4-hydroxy-3-methylbut-2-enyl diphosphate reductase of Azoarcus sp. (strain BH72).